We begin with the raw amino-acid sequence, 841 residues long: MKIERYFKAIARAFIITFLFSLILQDNGVLARKAKKQDKGAALKSIYDYHVRPYGTVVQSQIAKASPIVDAAKQATVNVKSYYDEHAKPKVENIRYEVNEVIDKKVAPCIKAFNEKARKIGSKVLDGDNLRELYTTGKERIHFFIVDVLIPFFQRVVQEVRTISRDIAEKLQYFWEIHAIPAYHHYKPIIQRGAMDGYMQLRYVFFPAAKATITQMIETSIRFLRTFLDMHIKPQLQHIYESVVEEKSEAFASATSSKILSEMSASMASSSAHYTSSPTILSRTKSVETPVPMEAAEEEPATEYSIPSSVTFNSQNDCFSNAMNYLEHEYETLVSTFTLSVSEHWEDLLRKATDSCQKELEAFEEISNLRVLAVENSLGNLIQKAEESNYDQAIMDLFEYVKDSILRVHERAIKLRTLSDSIRADVAENIEMGINSIREQAAASSEVALAACSGIKHNAEQVNKLNALIQKVYSYITAESEKVGNRYGETLDNVIKQHLSRIGSVASSAVQRLTAVKNSHKLKMVDRSSAELPNFDYLVSDQVHKIVEINDEHADCDDVNFSTASFEIYERSIPTHGADSERKILKRDSLLNEDDEIFNDLNSDKTIKTNQATSTSSSNTQEISYTGTLNDNINEGLSTFPSIDIPASEADNVYSILPIDVSTSEAEGAYSILPIDVPKSVAEETYSFLPSDVPKSEAEKVYSILPIDVPQSVAEETYSFKPSDIPESEAEKIYSILPIDVKDPSLEKDGHVIDSSNLQTDSVKDYSEVSRADNLDASSDTIFSVLHAENEASITKEVHSTPLSDVASSEAEKVYTILPIEVPTDPLPNYSSDVESELTSD.

Residues 1 to 31 (MKIERYFKAIARAFIITFLFSLILQDNGVLA) form the signal peptide.

The protein resides in the secreted. This is an uncharacterized protein from Schizosaccharomyces pombe (strain 972 / ATCC 24843) (Fission yeast).